Consider the following 71-residue polypeptide: MKADIHPNYEVVAVTCSCGNKFETRSTLGSVLAIDVCNLCHPFYTGKQKVLDTGGRVQKFADRFGMFGTKK.

The Zn(2+) site is built by Cys16, Cys18, Cys37, and Cys40.

The protein belongs to the bacterial ribosomal protein bL31 family. Type A subfamily. As to quaternary structure, part of the 50S ribosomal subunit. Requires Zn(2+) as cofactor.

Functionally, binds the 23S rRNA. The sequence is that of Large ribosomal subunit protein bL31 from Pseudomonas entomophila (strain L48).